We begin with the raw amino-acid sequence, 509 residues long: 2,3-bisphosphoglycerate-independent phosphoglycerate mutase (509 aa).

Asp-11 provides a ligand contact to Mn(2+). At Tyr-35 the chain carries Phosphotyrosine. Residue Ser-61 coordinates Mn(2+). Ser-61 serves as the catalytic Phosphoserine intermediate. Residues His-122, 152 to 153, Arg-184, Arg-190, 260 to 263, and Lys-335 contribute to the substrate site; these read RD and RPDR. The Mn(2+) site is built by Asp-402, His-406, Asp-443, His-444, and His-461.

The protein belongs to the BPG-independent phosphoglycerate mutase family. In terms of assembly, monomer. Mn(2+) is required as a cofactor.

The catalysed reaction is (2R)-2-phosphoglycerate = (2R)-3-phosphoglycerate. Its pathway is carbohydrate degradation; glycolysis; pyruvate from D-glyceraldehyde 3-phosphate: step 3/5. Its function is as follows. Essential for rapid growth and for sporulation. Catalyzes the interconversion of 2-phosphoglycerate and 3-phosphoglycerate. This chain is 2,3-bisphosphoglycerate-independent phosphoglycerate mutase, found in Bacillus anthracis.